Reading from the N-terminus, the 414-residue chain is Histidinol dehydrogenase (414 aa).

NAD(+) is bound by residues Tyr-116, Gln-177, and Asn-200. Substrate is bound by residues Thr-223, Gln-245, and His-248. The Zn(2+) site is built by Gln-245 and His-248. Active-site proton acceptor residues include Glu-313 and His-314. Substrate is bound by residues His-314, Asp-347, Glu-401, and His-406. Asp-347 provides a ligand contact to Zn(2+). Residue His-406 coordinates Zn(2+).

The protein belongs to the histidinol dehydrogenase family. It depends on Zn(2+) as a cofactor.

It carries out the reaction L-histidinol + 2 NAD(+) + H2O = L-histidine + 2 NADH + 3 H(+). It functions in the pathway amino-acid biosynthesis; L-histidine biosynthesis; L-histidine from 5-phospho-alpha-D-ribose 1-diphosphate: step 9/9. Functionally, catalyzes the sequential NAD-dependent oxidations of L-histidinol to L-histidinaldehyde and then to L-histidine. The polypeptide is Histidinol dehydrogenase (Staphylococcus epidermidis (strain ATCC 35984 / DSM 28319 / BCRC 17069 / CCUG 31568 / BM 3577 / RP62A)).